The sequence spans 255 residues: 3-oxoacyl-[acyl-carrier-protein] reductase MabA (255 aa).

Residues 33–35, Arg55, 69–70, Gly98, Tyr161, Lys165, Ile194, and Arg205 contribute to the NADP(+) site; these read RGI and DV. Tyr161 serves as the catalytic Proton acceptor.

Belongs to the short-chain dehydrogenases/reductases (SDR) family. Homotetramer.

It is found in the secreted. The protein localises to the cell wall. The enzyme catalyses a (3R)-hydroxyacyl-[ACP] + NADP(+) = a 3-oxoacyl-[ACP] + NADPH + H(+). It participates in lipid metabolism; mycolic acid biosynthesis. Functionally, part of the mycobacterial fatty acid elongation system FAS-II, which is involved in mycolic acid biosynthesis. Catalyzes the NADPH-dependent reduction of beta-ketoacyl derivatives, the second step of the FAS-II elongation cycle. This is 3-oxoacyl-[acyl-carrier-protein] reductase MabA from Mycobacterium avium.